The following is a 534-amino-acid chain: Replication factor C large subunit (534 aa).

Gly45–Thr52 serves as a coordination point for ATP. Over residues Lys444–Lys463 the composition is skewed to basic and acidic residues. Residues Lys444–Phe534 form a disordered region. The segment covering Ser488–Thr510 has biased composition (low complexity). Over residues Thr517–Arg527 the composition is skewed to basic residues.

This sequence belongs to the activator 1 small subunits family. RfcL subfamily. In terms of assembly, heteromultimer composed of small subunits (RfcS) and large subunits (RfcL).

Its function is as follows. Part of the RFC clamp loader complex which loads the PCNA sliding clamp onto DNA. This chain is Replication factor C large subunit, found in Methanosphaera stadtmanae (strain ATCC 43021 / DSM 3091 / JCM 11832 / MCB-3).